The primary structure comprises 307 residues: Cyclin-dependent kinase 5 activator 1 (307 aa).

A lipid anchor (N-myristoyl glycine) is attached at Gly2. Ser8 carries the phosphoserine; by CDK5 modification. The tract at residues 97-135 (TFAQPPPAQPPAPPASQLSGSQTGVSSSVKKAPHPAVSS) is disordered. Over residues 100-110 (QPPPAQPPAPP) the composition is skewed to pro residues. Positions 112-125 (SQLSGSQTGVSSSV) are enriched in polar residues. Thr138 is subject to Phosphothreonine; by CDK5.

The protein belongs to the cyclin-dependent kinase 5 activator family. Heterodimer composed of a catalytic subunit CDK5 and a regulatory subunit CDK5R1 (p25) and macromolecular complex composed of at least CDK5, CDK5R1 (p35) and CDK5RAP1 or CDK5RAP2 or CDK5RAP3. Only the heterodimer shows kinase activity. Interacts with EPHA4 and NGEF; may mediate the activation of NGEF by EPHA4. Interacts with RASGRF2. The complex p35/CDK5 interacts with CLOCK. The p35 form is proteolytically cleaved by calpain, giving rise to the p25 form. P35 has a 5 to 10 fold shorter half-life compared to p25. The conversion results in deregulation of the CDK5 kinase: p25/CDK5 kinase displays an increased and altered tau phosphorylation in comparison to the p35/CDK5 kinase in vivo. Post-translationally, myristoylated. A proper myristoylation signal is essential for the proper distribution of p35. In terms of processing, phosphorylation at Ser-8 and Thr-138 by CDK5 prevents calpain-mediated proteolysis. Ubiquitinated, leading to its degradation: degradation of p35 by proteasome results in down-regulation of CDK5 activity. During this process, CDK5 phosphorylates p35 and induces its ubiquitination and subsequent degradation. Ubiquitinated by the CRL2(FEM1B) complex, which recognizes the -Gly-Leu-Asp-Arg C-degron at the C-terminus, leading to its degradation. In terms of tissue distribution, brain and neuron specific.

It localises to the cell membrane. The protein resides in the cell projection. The protein localises to the neuron projection. Its subcellular location is the nucleus. It is found in the cytoplasm. It localises to the perinuclear region. The protein resides in the perikaryon. Its function is as follows. p35 is a neuron specific activator of CDK5. The complex p35/CDK5 is required for neurite outgrowth and cortical lamination. Involved in dendritic spine morphogenesis by mediating the EFNA1-EPHA4 signaling. Activator of TPKII. The complex p35/CDK5 participates in the regulation of the circadian clock by modulating the function of CLOCK protein: phosphorylates CLOCK at 'Thr-451' and 'Thr-461' and regulates the transcriptional activity of the CLOCK-BMAL1 heterodimer in association with altered stability and subcellular distribution. This Bos taurus (Bovine) protein is Cyclin-dependent kinase 5 activator 1 (CDK5R1).